The following is a 321-amino-acid chain: Lipoyl synthase (321 aa).

[4Fe-4S] cluster is bound by residues cysteine 68, cysteine 73, cysteine 79, cysteine 94, cysteine 98, cysteine 101, and serine 308. Residues 80 to 297 (FNHGTATFMI…KELAESIGFT (218 aa)) enclose the Radical SAM core domain.

The protein belongs to the radical SAM superfamily. Lipoyl synthase family. Requires [4Fe-4S] cluster as cofactor.

It localises to the cytoplasm. The catalysed reaction is [[Fe-S] cluster scaffold protein carrying a second [4Fe-4S](2+) cluster] + N(6)-octanoyl-L-lysyl-[protein] + 2 oxidized [2Fe-2S]-[ferredoxin] + 2 S-adenosyl-L-methionine + 4 H(+) = [[Fe-S] cluster scaffold protein] + N(6)-[(R)-dihydrolipoyl]-L-lysyl-[protein] + 4 Fe(3+) + 2 hydrogen sulfide + 2 5'-deoxyadenosine + 2 L-methionine + 2 reduced [2Fe-2S]-[ferredoxin]. It participates in protein modification; protein lipoylation via endogenous pathway; protein N(6)-(lipoyl)lysine from octanoyl-[acyl-carrier-protein]: step 2/2. Catalyzes the radical-mediated insertion of two sulfur atoms into the C-6 and C-8 positions of the octanoyl moiety bound to the lipoyl domains of lipoate-dependent enzymes, thereby converting the octanoylated domains into lipoylated derivatives. This chain is Lipoyl synthase, found in Shewanella pealeana (strain ATCC 700345 / ANG-SQ1).